The primary structure comprises 637 residues: uncharacterized protein (637 aa).

The segment at residues 7 to 34 (CDLCRLKKIKCSRGQPRCQTCTLFQADC) is a DNA-binding region (zn(2)-C6 fungal-type). The segment at 304–327 (SLCRTLCGQACLMAQQLNLHRKQS) adopts a C2H2-type; degenerate zinc-finger fold.

It is found in the nucleus. This is an uncharacterized protein from Schizosaccharomyces pombe (strain 972 / ATCC 24843) (Fission yeast).